A 745-amino-acid polypeptide reads, in one-letter code: 5-methyltetrahydropteroyltriglutamate--homocysteine methyltransferase (745 aa).

5-methyltetrahydropteroyltri-L-glutamate is bound by residues 19–22 (RELK) and K119. L-homocysteine-binding positions include 418 to 420 (IGS) and E471. Residues 418–420 (IGS) and E471 contribute to the L-methionine site. 5-methyltetrahydropteroyltri-L-glutamate-binding positions include 502-503 (RC) and W548. Residue D586 coordinates L-homocysteine. D586 contacts L-methionine. A 5-methyltetrahydropteroyltri-L-glutamate-binding site is contributed by E592. Zn(2+)-binding residues include H628, C630, and E652. The active-site Proton donor is the H681. C713 contributes to the Zn(2+) binding site.

The protein belongs to the vitamin-B12 independent methionine synthase family. Zn(2+) is required as a cofactor.

It catalyses the reaction 5-methyltetrahydropteroyltri-L-glutamate + L-homocysteine = tetrahydropteroyltri-L-glutamate + L-methionine. Its pathway is amino-acid biosynthesis; L-methionine biosynthesis via de novo pathway; L-methionine from L-homocysteine (MetE route): step 1/1. Its function is as follows. Catalyzes the transfer of a methyl group from 5-methyltetrahydrofolate to homocysteine resulting in methionine formation. The polypeptide is 5-methyltetrahydropteroyltriglutamate--homocysteine methyltransferase (Corynebacterium glutamicum (strain R)).